A 387-amino-acid polypeptide reads, in one-letter code: Type 2 DNA topoisomerase 6 subunit A (387 aa).

The 149-residue stretch at 12–160 folds into the Topo IIA-type catalytic domain; the sequence is EARKKALAVF…MLILSKEKGK (149 aa). Residue tyrosine 106 is the O-(5'-phospho-DNA)-tyrosine intermediate of the active site. Positions 207 and 259 each coordinate Mg(2+).

It belongs to the TOP6A family. Homodimer. Heterotetramer of two Top6A and two Top6B chains. Mg(2+) serves as cofactor.

The enzyme catalyses ATP-dependent breakage, passage and rejoining of double-stranded DNA.. Functionally, relaxes both positive and negative superturns and exhibits a strong decatenase activity. The sequence is that of Type 2 DNA topoisomerase 6 subunit A from Hyperthermus butylicus (strain DSM 5456 / JCM 9403 / PLM1-5).